The following is a 346-amino-acid chain: uncharacterized protein (346 aa).

Belongs to the IIV-6 359L family.

This is an uncharacterized protein from Invertebrate iridescent virus 6 (IIV-6).